The following is a 582-amino-acid chain: MSLIIQSLPHWSRIPPRPPQLSQFQNSSRPKPLIQAGQVQHNALQIARRSANYHPSIWDPQYIESLKSPYGDECFGTRLEKLKFEAKRLLEATIEPLSWLELVDSIQRLGVAYHFEDEIKEGLDGVYGVGAHAGDDLYTAALQFRLLRQHGYGVTPDIFNKFLEKERTFKACTSLDAKGLLSLYEASHTMIHGEEVLEDAKEFSVKHLNYLMGNLQNNLREQVQHALEMPLHWRMPRLEAKHYIDVNGRSDERNMVLLELARLDFNFVQSKHQEELKEVSRWWRDLGLAKKLGFSRDRLVENYLWAVGIAPEPKFSNCRKGLTKLISILTVIDDIYDVYGSLDELELFTEAVKRWDIEALETLPEYMKICYLALFNFVHEVSYDTLKDYGWNILPFIREEWERLCMSYLVEAEWFGNGNKPALDEYLRNGWISVGGPVAMVHAYFLQGRPIRKDSINFLDHGSELIYWSSVATRLNDDLGTSKAEMKRGDVPKAVECYMIQTGESYEDAREHIQGLVRDCWKKMNEECLKCCLPKSYVETVLNMVRTAQCIYQHGDGIGTSTGVTQDRVISLICEPVPSQWP.

The N-terminal 35 residues, 1–35, are a transit peptide targeting the chloroplast; that stretch reads MSLIIQSLPHWSRIPPRPPQLSQFQNSSRPKPLIQ. (2E)-geranyl diphosphate-binding residues include R296, D333, D337, R474, and D477. Mg(2+) is bound by residues D333 and D337. A DDXXD motif motif is present at residues 333-337; that stretch reads DDIYD. Mg(2+) contacts are provided by D477, T481, and E485.

Belongs to the terpene synthase family. Tpsb subfamily. Monomer. Mg(2+) is required as a cofactor. Mn(2+) serves as cofactor. Expressed in male and female leaves. Barely detectable in fruits and shoots.

It is found in the plastid. The protein localises to the chloroplast. The catalysed reaction is (2E)-geranyl diphosphate = (E)-beta-ocimene + diphosphate. It functions in the pathway secondary metabolite biosynthesis; terpenoid biosynthesis. In terms of biological role, monoterpene synthase (TPS) involved in the biosynthesis of monoterpene natural products used by traditional Chinese medicine to treat headache, inflammation and intoxication. Catalyzes the conversion of (2E)-geranyl diphosphate (GPP) into (E)-beta-ocimene. This is Trans-ocimene synthase, chloroplastic from Litsea cubeba (Aromatic litsea).